The primary structure comprises 371 residues: Putative glutamate--cysteine ligase 2 (371 aa).

Belongs to the glutamate--cysteine ligase type 2 family. YbdK subfamily.

It catalyses the reaction L-cysteine + L-glutamate + ATP = gamma-L-glutamyl-L-cysteine + ADP + phosphate + H(+). In terms of biological role, ATP-dependent carboxylate-amine ligase which exhibits weak glutamate--cysteine ligase activity. This chain is Putative glutamate--cysteine ligase 2, found in Cupriavidus necator (strain ATCC 17699 / DSM 428 / KCTC 22496 / NCIMB 10442 / H16 / Stanier 337) (Ralstonia eutropha).